We begin with the raw amino-acid sequence, 622 residues long: Sodium-coupled monocarboxylate transporter 1 (622 aa).

The Extracellular segment spans residues 1–15 (MVTPGNIGSFTVWDY). Residues 16-36 (LVFALMLLISAVIGIYYAFAG) form a helical membrane-spanning segment. Residues 37-51 (GGQKTSKDFLMGGRS) are Cytoplasmic-facing. Residues 52–72 (MTAVPVALSLTASFMSAVTVL) form a helical membrane-spanning segment. Residues 73 to 83 (GTPAEVYRFGA) lie on the Extracellular side of the membrane. A helical membrane pass occupies residues 84-104 (MFIIFAFSYTIVVIISSEVFL). Topologically, residues 105 to 128 (PVFYRLGITSTYEYLELRFNKFVR) are cytoplasmic. The chain crosses the membrane as a helical span at residues 129-149 (LLGTILFIIQTVLYTGIVIYA). Residues 150–161 (PALALNQVTGFD) are Extracellular-facing. The helical transmembrane segment at 162-182 (LWGAVVATGVVCTFYCTMGGL) threads the bilayer. Residues 183 to 184 (KA) lie on the Cytoplasmic side of the membrane. Residues 185-205 (VVWTDVFQVGIMVAGFTSVII) form a helical membrane-spanning segment. The Extracellular portion of the chain corresponds to 206 to 241 (RAVVVQGGIGPILNDSYYGDRLNFWDFDPNPLKRHT). Residue N219 is glycosylated (N-linked (GlcNAc...) asparagine). Residues 242-262 (FWTIVVGGTFTWTGIYGVNQA) traverse the membrane as a helical segment. Over 263–283 (QVQRYIACKTRFQAKMSLYVN) the chain is Cytoplasmic. A helical transmembrane segment spans residues 284-304 (LIGLWAILACAVLSGLAMYSI). The Extracellular segment spans residues 305-336 (YKDCDPWTAKFVSAPDQLMPYLALDILRDYPG). A helical membrane pass occupies residues 337–357 (LPGLFVSCAYSGTLSTVSSSI). Residues 358-389 (NALAAVTVEDLIKPYIRSLSEKKMSWISKGTS) are Cytoplasmic-facing. The chain crosses the membrane as a helical span at residues 390-410 (LLYGAICIGMAGIASLMGGLL). Over 411–415 (QAALS) the chain is Extracellular. Residues 416 to 436 (IFGMVGGPLLGLFSLGILFPF) traverse the membrane as a helical segment. The Cytoplasmic portion of the chain corresponds to 437–438 (VN). Residues 439 to 459 (SLGAVIGLLSGFAISLWVGIG) traverse the membrane as a helical segment. The Extracellular portion of the chain corresponds to 460 to 521 (SQIYAPSPSS…LADSWYSLSY (62 aa)). 2 N-linked (GlcNAc...) asparagine glycosylation sites follow: N481 and N488. Residues 522–542 (LYFSTIGTIVAVLVGVIVSLL) form a helical membrane-spanning segment. Over 543–622 (SGGLKQNVNR…KGEKTNGITA (80 aa)) the chain is Cytoplasmic. The tract at residues 591–622 (DNDMEQGTDNPAFNNMEMTSTEKGEKTNGITA) is disordered. The span at 595 to 609 (EQGTDNPAFNNMEMT) shows a compositional bias: polar residues.

It belongs to the sodium:solute symporter (SSF) (TC 2.A.21) family. In the gastrula and neurula stages, expressed in the gastrula anterior endoderm and in the entire circumference of the blastopore lip superficial endoderm. At tailbud stages, abundant expression observed in the ventral midgut region. As development proceeds expression becomes restricted to the liver diverticulum and ultimately to the presumptive gallbladder, by tadpole stage 35. Also present in pronephros and the tip of the tail.

It localises to the apical cell membrane. It carries out the reaction (S)-lactate(out) + 2 Na(+)(out) = (S)-lactate(in) + 2 Na(+)(in). The enzyme catalyses propanoate(out) + 2 Na(+)(out) = propanoate(in) + 2 Na(+)(in). It catalyses the reaction pyruvate(out) + 2 Na(+)(out) = pyruvate(in) + 2 Na(+)(in). The catalysed reaction is acetate(out) + 2 Na(+)(out) = acetate(in) + 2 Na(+)(in). It carries out the reaction butanoate(out) + 2 Na(+)(out) = butanoate(in) + 2 Na(+)(in). The enzyme catalyses nicotinate(out) + 2 Na(+)(out) = nicotinate(in) + 2 Na(+)(in). It catalyses the reaction (R)-3-hydroxybutanoate(out) + 2 Na(+)(out) = (R)-3-hydroxybutanoate(in) + 2 Na(+)(in). The catalysed reaction is acetoacetate(out) + 2 Na(+)(out) = acetoacetate(in) + 2 Na(+)(in). It carries out the reaction 4-methyl-2-oxopentanoate(out) + 2 Na(+)(out) = 4-methyl-2-oxopentanoate(in) + 2 Na(+)(in). The enzyme catalyses 5-oxo-L-proline(out) + 2 Na(+)(out) = 5-oxo-L-proline(in) + 2 Na(+)(in). It catalyses the reaction iodide(out) = iodide(in). The catalysed reaction is chloride(in) = chloride(out). It carries out the reaction nitrate(in) = nitrate(out). The enzyme catalyses bromide(in) = bromide(out). Functionally, acts as an electrogenic sodium (Na(+)) and chloride (Cl-)-dependent sodium-coupled solute transporter, including transport of monocarboxylates (short-chain fatty acids including L-lactate, D-lactate, pyruvate, acetate, propionate, valerate and butyrate), mocarboxylate drugs (nicotinate, benzoate, salicylate and 5-aminosalicylate) and ketone bodies (beta-D-hydroxybutyrate, acetoacetate and alpha-ketoisocaproate), with a Na(+):substrate stoichiometry of between 4:1 and 2:1. Catalyzes passive carrier mediated diffusion of iodide. Mediates iodide transport from the thyrocyte into the colloid lumen through the apical membrane. Mediates sodium-coupled electrogenic transport of pyroglutamate (5-oxo-L-proline). Can mediate the transport of chloride, bromide, iodide and nitrate ions when external concentration of sodium ions is reduced. The sequence is that of Sodium-coupled monocarboxylate transporter 1 from Xenopus laevis (African clawed frog).